Reading from the N-terminus, the 354-residue chain is Guanine nucleotide-binding protein G(o) subunit alpha (354 aa).

The N-myristoyl glycine moiety is linked to residue Gly2. Cys3 carries S-palmitoyl cysteine lipidation. The 323-residue stretch at 32–354 (KDVKLLLLGA…ANNLRGCGLY (323 aa)) folds into the G-alpha domain. The tract at residues 35-48 (KLLLLGAGESGKST) is G1 motif. The GTP site is built by Glu43, Lys46, Ser47, Thr48, Ser152, Leu176, Arg177, Thr178, and Arg179. Mg(2+) is bound at residue Ser47. Positions 174–182 (DILRTRVKT) are G2 motif. Thr182 contacts Mg(2+). The G3 motif stretch occupies residues 197-206 (FRLFDVGGQR). The residue at position 205 (Gln205) is a 5-glutamyl histamine. The segment at 266 to 273 (ILFLNKKD) is G4 motif. Asn270, Asp273, and Cys325 together coordinate GTP. Residues 324-329 (TCATDT) are G5 motif. The residue at position 346 (Asn346) is a Deamidated asparagine; in form Alpha-3. Cys351 is lipidated: S-palmitoyl cysteine.

It belongs to the G-alpha family. G(i/o/t/z) subfamily. G proteins are composed of 3 units; alpha, beta and gamma. The alpha chain contains the guanine nucleotide binding site. Forms a complex with GNB1 and GNG3. Interacts with RGS14. Interacts with RGS16. Interacts with RGS19. Interacts (when palmitoylated) with ADGRG3. Deamidation of Asn-346 converts alpha-1 to alpha-3. Post-translationally, histaminylated at Gln-205 residues by TGM2.

Its subcellular location is the cell membrane. The protein resides in the membrane. It carries out the reaction GTP + H2O = GDP + phosphate + H(+). Its activity is regulated as follows. The GTPase activity is promoted by GTPAse activators, such as RGS14, RGS16 and RGS19. Functionally, guanine nucleotide-binding proteins (G proteins) function as transducers downstream of G protein-coupled receptors (GPCRs) in numerous signaling cascades. The alpha chain contains the guanine nucleotide binding site and alternates between an active, GTP-bound state and an inactive, GDP-bound state. Signaling by an activated GPCR promotes GDP release and GTP binding. The alpha subunit has a low GTPase activity that converts bound GTP to GDP, thereby terminating the signal. Both GDP release and GTP hydrolysis are modulated by numerous regulatory proteins. Signaling is mediated via effector proteins, such as adenylate cyclase. Inhibits adenylate cyclase activity, leading to decreased intracellular cAMP levels. In Cricetulus longicaudatus (Long-tailed dwarf hamster), this protein is Guanine nucleotide-binding protein G(o) subunit alpha (GNAO1).